Consider the following 288-residue polypeptide: UTP--glucose-1-phosphate uridylyltransferase (288 aa).

The protein belongs to the UDPGP type 2 family.

It carries out the reaction alpha-D-glucose 1-phosphate + UTP + H(+) = UDP-alpha-D-glucose + diphosphate. Its pathway is glycolipid metabolism; diglucosyl-diacylglycerol biosynthesis. Functionally, catalyzes the formation of UDP-glucose from glucose-1-phosphate and UTP. This is an intermediate step in the biosynthesis of diglucosyl-diacylglycerol (Glc2-DAG), i.e. the predominant glycolipid found in the S.aureus membrane, which is also used as a membrane anchor for lipoteichoic acid (LTA). This is UTP--glucose-1-phosphate uridylyltransferase (gtaB) from Staphylococcus aureus (strain bovine RF122 / ET3-1).